The following is a 71-amino-acid chain: Large ribosomal subunit protein bL31 (71 aa).

Residues C16, C18, C37, and C40 each contribute to the Zn(2+) site.

It belongs to the bacterial ribosomal protein bL31 family. Type A subfamily. In terms of assembly, part of the 50S ribosomal subunit. Requires Zn(2+) as cofactor.

Its function is as follows. Binds the 23S rRNA. In Marinomonas sp. (strain MWYL1), this protein is Large ribosomal subunit protein bL31.